A 580-amino-acid chain; its full sequence is Thymidine kinase (580 aa).

Disordered stretches follow at residues 1-60 (MAEG…KSVK) and 133-157 (VCGR…ASMG). The segment covering 137–149 (PPLPPPNHPPPAT) has biased composition (pro residues). 260 to 267 (GVMGVGKS) is an ATP binding site. The active-site Proton acceptor is the Glu287. Gln325 contacts substrate. Arg415 contacts ATP. Arg421 is a substrate binding site.

Belongs to the herpesviridae thymidine kinase family. Homodimer.

It carries out the reaction thymidine + ATP = dTMP + ADP + H(+). In terms of biological role, catalyzes the transfer of the gamma-phospho group of ATP to thymidine to generate dTMP in the salvage pathway of pyrimidine synthesis. The dTMP serves as a substrate for DNA polymerase during viral DNA replication. Allows the virus to be reactivated and to grow in non-proliferative cells lacking a high concentration of phosphorylated nucleic acid precursors. In Human herpesvirus 8 type P (isolate GK18) (HHV-8), this protein is Thymidine kinase.